Reading from the N-terminus, the 247-residue chain is Ubiquinone biosynthesis O-methyltransferase (247 aa).

Residues R39, G70, D91, and M134 each coordinate S-adenosyl-L-methionine.

It belongs to the methyltransferase superfamily. UbiG/COQ3 family.

The catalysed reaction is a 3-demethylubiquinol + S-adenosyl-L-methionine = a ubiquinol + S-adenosyl-L-homocysteine + H(+). It catalyses the reaction a 3-(all-trans-polyprenyl)benzene-1,2-diol + S-adenosyl-L-methionine = a 2-methoxy-6-(all-trans-polyprenyl)phenol + S-adenosyl-L-homocysteine + H(+). The protein operates within cofactor biosynthesis; ubiquinone biosynthesis. Functionally, O-methyltransferase that catalyzes the 2 O-methylation steps in the ubiquinone biosynthetic pathway. The polypeptide is Ubiquinone biosynthesis O-methyltransferase (Cereibacter sphaeroides (strain ATCC 17029 / ATH 2.4.9) (Rhodobacter sphaeroides)).